Here is a 360-residue protein sequence, read N- to C-terminus: UDP-N-acetylglucosamine--N-acetylmuramyl-(pentapeptide) pyrophosphoryl-undecaprenol N-acetylglucosamine transferase (360 aa).

Residues 15 to 17 (TGG), asparagine 128, arginine 164, serine 192, isoleucine 247, and glutamine 292 contribute to the UDP-N-acetyl-alpha-D-glucosamine site.

It belongs to the glycosyltransferase 28 family. MurG subfamily.

It is found in the cell inner membrane. It carries out the reaction di-trans,octa-cis-undecaprenyl diphospho-N-acetyl-alpha-D-muramoyl-L-alanyl-D-glutamyl-meso-2,6-diaminopimeloyl-D-alanyl-D-alanine + UDP-N-acetyl-alpha-D-glucosamine = di-trans,octa-cis-undecaprenyl diphospho-[N-acetyl-alpha-D-glucosaminyl-(1-&gt;4)]-N-acetyl-alpha-D-muramoyl-L-alanyl-D-glutamyl-meso-2,6-diaminopimeloyl-D-alanyl-D-alanine + UDP + H(+). It participates in cell wall biogenesis; peptidoglycan biosynthesis. In terms of biological role, cell wall formation. Catalyzes the transfer of a GlcNAc subunit on undecaprenyl-pyrophosphoryl-MurNAc-pentapeptide (lipid intermediate I) to form undecaprenyl-pyrophosphoryl-MurNAc-(pentapeptide)GlcNAc (lipid intermediate II). The protein is UDP-N-acetylglucosamine--N-acetylmuramyl-(pentapeptide) pyrophosphoryl-undecaprenol N-acetylglucosamine transferase of Blochmanniella floridana.